Consider the following 106-residue polypeptide: MYAVLVTGGKQYRVAQGETLRVEKLEVEAGNEIKFDTVLMLGDSDGIKLGDALKGASVTAKVVAHGRADKVRIIKFRRRKHHMKRQGHRQHYTEIEITGIAGGDKK.

Belongs to the bacterial ribosomal protein bL21 family. As to quaternary structure, part of the 50S ribosomal subunit. Contacts protein L20.

This protein binds to 23S rRNA in the presence of protein L20. This Xanthomonas oryzae pv. oryzae (strain MAFF 311018) protein is Large ribosomal subunit protein bL21.